A 505-amino-acid chain; its full sequence is Cytochrome P450 4Z1 (505 aa).

Over 1–9 the chain is Cytoplasmic; that stretch reads MEPSWLQEL. The helical; Signal-anchor for type II membrane protein transmembrane segment at 10 to 30 threads the bilayer; it reads MAHPFLLLILLCMSLLLFQVI. Topologically, residues 31-505 are lumenal; sequence RLYQRRRWMI…GIHVFAKKVC (475 aa). A heme-binding site is contributed by cysteine 452.

It belongs to the cytochrome P450 family. Heme serves as cofactor. Preferentially detected in breast carcinoma tissue and mammary gland, whereas only marginal expression is found in all other tested tissues.

The protein localises to the endoplasmic reticulum membrane. It is found in the microsome membrane. It carries out the reaction an organic molecule + reduced [NADPH--hemoprotein reductase] + O2 = an alcohol + oxidized [NADPH--hemoprotein reductase] + H2O + H(+). The enzyme catalyses dodecanoate + reduced [NADPH--hemoprotein reductase] + O2 = 7-hydroxydodecanoate + oxidized [NADPH--hemoprotein reductase] + H2O + H(+). It catalyses the reaction dodecanoate + reduced [NADPH--hemoprotein reductase] + O2 = 8-hydroxydodecanoate + oxidized [NADPH--hemoprotein reductase] + H2O + H(+). The catalysed reaction is dodecanoate + reduced [NADPH--hemoprotein reductase] + O2 = 9-hydroxydodecanoate + oxidized [NADPH--hemoprotein reductase] + H2O + H(+). It carries out the reaction dodecanoate + reduced [NADPH--hemoprotein reductase] + O2 = 10-hydroxydodecanoate + oxidized [NADPH--hemoprotein reductase] + H2O + H(+). The enzyme catalyses dodecanoate + reduced [NADPH--hemoprotein reductase] + O2 = 11-hydroxydodecanoate + oxidized [NADPH--hemoprotein reductase] + H2O + H(+). It catalyses the reaction tetradecanoate + reduced [NADPH--hemoprotein reductase] + O2 = 9-hydroxytetradecanoate + oxidized [NADPH--hemoprotein reductase] + H2O + H(+). The catalysed reaction is tetradecanoate + reduced [NADPH--hemoprotein reductase] + O2 = 10-hydroxytetradecanoate + oxidized [NADPH--hemoprotein reductase] + H2O + H(+). It carries out the reaction tetradecanoate + reduced [NADPH--hemoprotein reductase] + O2 = 11-hydroxytetradecanoate + oxidized [NADPH--hemoprotein reductase] + H2O + H(+). The enzyme catalyses tetradecanoate + reduced [NADPH--hemoprotein reductase] + O2 = 12-hydroxytetradecanoate + oxidized [NADPH--hemoprotein reductase] + H2O + H(+). It catalyses the reaction (5Z,8Z,11Z,14Z)-eicosatetraenoate + reduced [NADPH--hemoprotein reductase] + O2 = (14S,15R)-epoxy-(5Z,8Z,11Z)-eicosatrienoate + oxidized [NADPH--hemoprotein reductase] + H2O + H(+). A cytochrome P450 monooxygenase that catalyzes the in-chain oxidation of fatty acids. Catalyzes the hydroxylation of carbon-hydrogen bonds. Hydroxylates lauric and myristic acids predominantly at the omega-4 and omega-2 positions, respectively. Catalyzes the epoxidation of double bonds of polyunsaturated fatty acids (PUFA). Displays an absolute stereoselectivity in the epoxidation of arachidonic acid producing the 14(S),15(R)-epoxyeicosatrienoic acid (EET) enantiomer. Mechanistically, uses molecular oxygen inserting one oxygen atom into a substrate, and reducing the second into a water molecule, with two electrons provided by NADPH via cytochrome P450 reductase (CPR; NADPH-ferrihemoprotein reductase). The polypeptide is Cytochrome P450 4Z1 (Homo sapiens (Human)).